The chain runs to 348 residues: Glucose 1-dehydrogenase 2 (348 aa).

Cys39 contributes to the Zn(2+) binding site. Position 41 (Thr41) interacts with substrate. Zn(2+) contacts are provided by His64 and Glu65. The substrate site is built by Glu110 and Glu146. Glu146 is a binding site for Zn(2+). Residues 178–181 (AGPV), 260–262 (LGV), and 289–291 (SVN) each bind NADP(+). Substrate is bound at residue Asn291.

This sequence belongs to the zinc-containing alcohol dehydrogenase family. Glucose 1-dehydrogenase subfamily. The cofactor is Zn(2+).

It catalyses the reaction D-glucose + NAD(+) = D-glucono-1,5-lactone + NADH + H(+). The enzyme catalyses D-glucose + NADP(+) = D-glucono-1,5-lactone + NADPH + H(+). Its function is as follows. Catalyzes the NAD(P)(+)-dependent oxidation of D-glucose to D-gluconate via gluconolactone. Can utilize both NAD(+) and NADP(+) as electron acceptor. Is involved in the degradation of glucose through a non-phosphorylative variant of the Entner-Doudoroff pathway. The sequence is that of Glucose 1-dehydrogenase 2 from Vulcanisaeta moutnovskia (strain 768-28).